The sequence spans 427 residues: Anaerobic glycerol-3-phosphate dehydrogenase subunit B (427 aa).

This sequence belongs to the anaerobic G-3-P dehydrogenase subunit B family. In terms of assembly, composed of a catalytic GlpA/B dimer and of membrane bound GlpC. FMN is required as a cofactor.

It carries out the reaction a quinone + sn-glycerol 3-phosphate = dihydroxyacetone phosphate + a quinol. The protein operates within polyol metabolism; glycerol degradation via glycerol kinase pathway; glycerone phosphate from sn-glycerol 3-phosphate (anaerobic route): step 1/1. In terms of biological role, conversion of glycerol 3-phosphate to dihydroxyacetone. Uses fumarate or nitrate as electron acceptor. This chain is Anaerobic glycerol-3-phosphate dehydrogenase subunit B, found in Glaesserella parasuis serovar 5 (strain SH0165) (Haemophilus parasuis).